A 665-amino-acid polypeptide reads, in one-letter code: Cysteine-rich receptor-like protein kinase 41 (665 aa).

The first 27 residues, 1–27, serve as a signal peptide directing secretion; the sequence is MTSSCSLSRPQHLFFFFFLFVPFLSLG. Residues 28 to 280 are Extracellular-facing; it reads QQISVDINSA…DPKPGNDKVK (253 aa). Gnk2-homologous domains are found at residues 42–148 and 154–260; these read PSNP…DKPI and TSPV…SDLR. 3 N-linked (GlcNAc...) asparagine glycosylation sites follow: Asn120, Asn165, and Asn236. The helical transmembrane segment at 281-301 threads the bilayer; that stretch reads IIIATVCSVIGFAIIAVFLYF. Residues 302–665 lie on the Cytoplasmic side of the membrane; it reads FMTRNRRTAK…DVTITEFDAR (364 aa). Residues 344 to 624 enclose the Protein kinase domain; it reads FSRDNQLGEG…VVMLNANSFT (281 aa). ATP is bound by residues 350–358 and Lys372; that span reads LGEGGFGAV. Phosphotyrosine is present on Tyr417. Asp469 serves as the catalytic Proton acceptor. Ser473 carries the post-translational modification Phosphoserine. Thr511 carries the post-translational modification Phosphothreonine. The residue at position 519 (Tyr519) is a Phosphotyrosine.

The protein belongs to the protein kinase superfamily. Ser/Thr protein kinase family. CRK subfamily.

It localises to the membrane. It catalyses the reaction L-seryl-[protein] + ATP = O-phospho-L-seryl-[protein] + ADP + H(+). The catalysed reaction is L-threonyl-[protein] + ATP = O-phospho-L-threonyl-[protein] + ADP + H(+). The chain is Cysteine-rich receptor-like protein kinase 41 (CRK41) from Arabidopsis thaliana (Mouse-ear cress).